A 467-amino-acid polypeptide reads, in one-letter code: tRNA-2-methylthio-N(6)-dimethylallyladenosine synthase (467 aa).

Residues 22–138 (GSYWITTFGC…LETLLNKVET (117 aa)) enclose the MTTase N-terminal domain. C31, C67, C101, C173, C177, and C180 together coordinate [4Fe-4S] cluster. Positions 159 to 396 (RDSSICAWVN…NSLVEIKAKE (238 aa)) constitute a Radical SAM core domain. Residues 399–467 (VRYKDRVEEV…AFSLSGVIEN (69 aa)) enclose the TRAM domain.

The protein belongs to the methylthiotransferase family. MiaB subfamily. As to quaternary structure, monomer. The cofactor is [4Fe-4S] cluster.

The protein localises to the cytoplasm. The catalysed reaction is N(6)-dimethylallyladenosine(37) in tRNA + (sulfur carrier)-SH + AH2 + 2 S-adenosyl-L-methionine = 2-methylsulfanyl-N(6)-dimethylallyladenosine(37) in tRNA + (sulfur carrier)-H + 5'-deoxyadenosine + L-methionine + A + S-adenosyl-L-homocysteine + 2 H(+). In terms of biological role, catalyzes the methylthiolation of N6-(dimethylallyl)adenosine (i(6)A), leading to the formation of 2-methylthio-N6-(dimethylallyl)adenosine (ms(2)i(6)A) at position 37 in tRNAs that read codons beginning with uridine. In Prochlorococcus marinus (strain MIT 9211), this protein is tRNA-2-methylthio-N(6)-dimethylallyladenosine synthase.